The following is a 943-amino-acid chain: Translation initiation factor IF-2 (943 aa).

Residues 30–357 (SVKSHSSSVE…KPVTERKFHE (328 aa)) are disordered. Basic and acidic residues-rich tracts occupy residues 69–82 (PKEE…DKAS), 112–137 (FKAE…DNRN), 145–155 (QGKRHNNDRRN), 163–196 (DHNK…RDNA), and 224–253 (RQSE…EKQQ). The segment covering 254-266 (VKVAVQKAAAETK) has biased composition (low complexity). Residues 296 to 309 (KSRDNRRVNEDGPK) are compositionally biased toward basic and acidic residues. Positions 313-332 (NNKWNNQNQVRNQRNSNWNK) are enriched in low complexity. One can recognise a tr-type G domain in the interval 445-614 (ERAPVVTIMG…LLVAEVEELK (170 aa)). Residues 454 to 461 (GHVDHGKT) are G1. 454–461 (GHVDHGKT) is a GTP binding site. The interval 479–483 (GITQH) is G2. The G3 stretch occupies residues 500–503 (DTPG). GTP-binding positions include 500–504 (DTPGH) and 554–557 (NKID). Residues 554 to 557 (NKID) form a G4 region. The interval 590 to 592 (SAK) is G5.

It belongs to the TRAFAC class translation factor GTPase superfamily. Classic translation factor GTPase family. IF-2 subfamily.

The protein localises to the cytoplasm. One of the essential components for the initiation of protein synthesis. Protects formylmethionyl-tRNA from spontaneous hydrolysis and promotes its binding to the 30S ribosomal subunits. Also involved in the hydrolysis of GTP during the formation of the 70S ribosomal complex. The sequence is that of Translation initiation factor IF-2 from Streptococcus thermophilus (strain ATCC BAA-250 / LMG 18311).